The sequence spans 156 residues: SsrA-binding protein (156 aa).

The protein belongs to the SmpB family.

Its subcellular location is the cytoplasm. Its function is as follows. Required for rescue of stalled ribosomes mediated by trans-translation. Binds to transfer-messenger RNA (tmRNA), required for stable association of tmRNA with ribosomes. tmRNA and SmpB together mimic tRNA shape, replacing the anticodon stem-loop with SmpB. tmRNA is encoded by the ssrA gene; the 2 termini fold to resemble tRNA(Ala) and it encodes a 'tag peptide', a short internal open reading frame. During trans-translation Ala-aminoacylated tmRNA acts like a tRNA, entering the A-site of stalled ribosomes, displacing the stalled mRNA. The ribosome then switches to translate the ORF on the tmRNA; the nascent peptide is terminated with the 'tag peptide' encoded by the tmRNA and targeted for degradation. The ribosome is freed to recommence translation, which seems to be the essential function of trans-translation. The protein is SsrA-binding protein of Clostridium botulinum (strain Alaska E43 / Type E3).